A 125-amino-acid chain; its full sequence is Large ribosomal subunit protein uL24 (125 aa).

The protein belongs to the universal ribosomal protein uL24 family. As to quaternary structure, part of the 50S ribosomal subunit.

In terms of biological role, one of two assembly initiator proteins, it binds directly to the 5'-end of the 23S rRNA, where it nucleates assembly of the 50S subunit. One of the proteins that surrounds the polypeptide exit tunnel on the outside of the subunit. The chain is Large ribosomal subunit protein uL24 from Mycoplasma mobile (strain ATCC 43663 / 163K / NCTC 11711) (Mesomycoplasma mobile).